The sequence spans 368 residues: Histone macroH2A1.1 (368 aa).

The segment at 154 to 177 is disordered; it reads AVSSSSAAASSSSSASSSSSVAPK. Residues 184 to 368 enclose the Macro domain; sequence TILSKKTLHL…VYNAELINTN (185 aa). Residues D203, L204, Q225, V226, S275, G313, S314, G315, N316, and N317 each contribute to the a glycoprotein site.

It belongs to the histone H2A family. As to quaternary structure, the nucleosome is a histone octamer containing two molecules each of H2A, H2B, H3 and H4 assembled in one H3-H4 heterotetramer and two H2A-H2B heterodimers.

It is found in the nucleus. Its subcellular location is the chromosome. Its function is as follows. Variant histone H2A which replaces conventional H2A in a subset of nucleosomes where it represses transcription. Nucleosomes wrap and compact DNA into chromatin, limiting DNA accessibility to the cellular machineries which require DNA as a template. Histones thereby play a central role in transcription regulation, DNA repair, DNA replication and chromosomal stability. DNA accessibility is regulated via a complex set of post-translational modifications of histones, also called histone code, and nucleosome remodeling. Specifically binds poly-ADP-ribose and plays a key role in NAD(+) metabolism. Able to bind to the ends of poly-ADP-ribose chains created by PARP1 and cap them. This prevents PARP1 from further addition of ADP-ribose and thus limits the consumption of nuclear NAD(+), allowing the cell to maintain proper NAD(+) levels in both the nucleus and the mitochondria to promote proper mitochondrial respiration. This Capsaspora owczarzaki (strain ATCC 30864) protein is Histone macroH2A1.1.